Reading from the N-terminus, the 79-residue chain is Eumenine mastoparan-OD (79 aa).

The N-terminal stretch at 1–24 is a signal peptide; the sequence is MKQTIVIVLLAAVAMMACLQMVAA. AXPX repeat units lie at residues 24–27, 30–33, 44–47, 52–55, and 58–61; these read AEPL, AAPA, ASPI, ANPE, and ASPE. Residues 25 to 62 constitute a propeptide that is removed on maturation; that stretch reads EPLPEAAPAPSPLAEAEALASPIAEALANPEALASPEA. Leu-76 is modified (leucine amide).

In terms of tissue distribution, expressed by the venom gland.

The protein resides in the secreted. Its subcellular location is the target cell membrane. Antimicrobial peptide with strong activity against the fungi C.albicans (MIC=6 uM) and B.cinerea (MIC=10 uM), and weaker activity against the Gram-negative bacterium E.coli (MIC=97 uM) and Gram-positive bacterium S.aureus (MIC=97 uM). Shows cytolytic activity against insect cell lines. Has potent hemolytic activity against ovine erythrocytes (80% at 50 uM), but has no hemolytic activity against human erythrocytes. In vivo, peptide injection in the vicinity of the head and thorax of lepidopteran larvae induces feeding disorder that lasts one or two days before recovering. This is Eumenine mastoparan-OD from Orancistrocerus drewseni (Solitary wasp).